Consider the following 757-residue polypeptide: Cartilage oligomeric matrix protein (757 aa).

An N-terminal signal peptide occupies residues 1-20; that stretch reads MVPDTACVLLLTLAALGASG. The interval 22–86 is COMP N-terminal; that stretch reads GQSPLGSDLG…SVRTGLPSVR (65 aa). Residues 87-126 enclose the EGF-like 1 domain; that stretch reads PLLHCAPGFCFPGVACIQTESGARCGPCPAGFTGNGSHCT. Intrachain disulfides connect Cys91–Cys102, Cys96–Cys111, Cys114–Cys125, Cys131–Cys142, Cys136–Cys151, Cys154–Cys178, Cys184–Cys197, Cys191–Cys206, Cys209–Cys221, Cys229–Cys243, Cys237–Cys253, Cys255–Cys266, Cys282–Cys287, Cys292–Cys312, Cys328–Cys348, Cys351–Cys371, Cys387–Cys407, Cys410–Cys430, Cys448–Cys468, Cys484–Cys504, and Cys520–Cys741. Residue Asn121 is glycosylated (N-linked (GlcNAc...) asparagine). The EGF-like 2; calcium-binding domain maps to 127-179; that stretch reads DVNECNAHPCFPRVRCINTSPGFRCEACPPGYSGPTHQGVGLAFAKANKQVCT. Positions 180-222 constitute an EGF-like 3; calcium-binding domain; it reads DINECETGQHNCVPNSVCINTRGSFQCGPCQPGFVGDQASGCQ. Residues 225–267 enclose the EGF-like 4 domain; the sequence is AQRFCPDGSPSECHEHADCVLERDGSRSCVCAVGWAGNGILCG. TSP type-3 repeat units lie at residues 268–300, 301–336, 337–359, 360–395, 396–418, 419–456, 457–492, and 493–528; these read RDTD…NSGQ, EDVD…NPDQ, RNTD…NDDQ, KDTD…NSDQ, KDSD…NPDQ, ADVD…NSAQ, EDSD…NPGQ, and EDAD…EVTL. A disordered region spans residues 298-503; the sequence is SGQEDVDRDG…DADRDGVGDV (206 aa). 2 stretches are compositionally biased toward basic and acidic residues: residues 334 to 346 and 352 to 370; these read PDQR…KWGD and RSQK…RGDA. A Cell attachment site motif is present at residues 367 to 369; it reads RGD. The segment covering 467–476 has biased composition (acidic residues); that stretch reads ACDDDDDNDG. Residues 527 to 757 form a mediates cell survival and induction of the IAP family of survival proteins region; sequence TLTDFRAFQT…DYETHQLRQA (231 aa). The TSP C-terminal domain maps to 532–746; the sequence is RAFQTVVLDP…LRYRCNDTIP (215 aa). The N-linked (GlcNAc...) asparagine glycan is linked to Asn742.

It belongs to the thrombospondin family. In terms of assembly, pentamer; disulfide-linked. Exists in a more compact conformation in the presence of calcium and shows a more extended conformation in the absence of calcium. Interacts with ITGB3, ITGA5 and FN1. Binding to FN1 requires the presence of divalent cations (Ca(2+), Mg(2+) or Mn(2+)). The greatest amount of binding is seen in the presence of Mn(2+). Interacts with MATN1, MATN3, MATN4 and ACAN. Binds heparin, heparan sulfate and chondroitin sulfate. EDTA dimishes significantly its binding to ACAN and abolishes its binding to MATN3, MATN4 and chondroitin sulfate. Interacts with collagen I, II and IX, and interaction with these collagens is dependent on the presence of zinc ions. Interacts with ADAMTS12. Interacts with ITGA7. Requires Ca(2+) as cofactor. Post-translationally, proteolytically cleaved by metalloproteases ADAMTS4 and ADAMTS1 with ADAMTS4 showing more potent activity. Abundantly expressed in the chondrocyte extracellular matrix, and is also found in bone, tendon, ligament and synovium and blood vessels. Increased amounts are produced during late stages of osteoarthritis in the area adjacent to the main defect.

The protein resides in the secreted. It localises to the extracellular space. Its subcellular location is the extracellular matrix. Its function is as follows. Plays a role in the structural integrity of cartilage via its interaction with other extracellular matrix proteins such as the collagens and fibronectin. Can mediate the interaction of chondrocytes with the cartilage extracellular matrix through interaction with cell surface integrin receptors. Could play a role in the pathogenesis of osteoarthritis. Potent suppressor of apoptosis in both primary chondrocytes and transformed cells. Suppresses apoptosis by blocking the activation of caspase-3 and by inducing the IAP family of survival proteins (BIRC3, BIRC2, BIRC5 and XIAP). Essential for maintaining a vascular smooth muscle cells (VSMCs) contractile/differentiated phenotype under physiological and pathological stimuli. Maintains this phenotype of VSMCs by interacting with ITGA7. The chain is Cartilage oligomeric matrix protein from Homo sapiens (Human).